We begin with the raw amino-acid sequence, 343 residues long: Methionine import ATP-binding protein MetN (343 aa).

Positions 2-241 constitute an ABC transporter domain; that stretch reads IKLSNITKVF…PKTPLAQKFI (240 aa). 38–45 provides a ligand contact to ATP; it reads GASGAGKS.

The protein belongs to the ABC transporter superfamily. Methionine importer (TC 3.A.1.24) family. As to quaternary structure, the complex is composed of two ATP-binding proteins (MetN), two transmembrane proteins (MetI) and a solute-binding protein (MetQ).

It localises to the cell inner membrane. The catalysed reaction is L-methionine(out) + ATP + H2O = L-methionine(in) + ADP + phosphate + H(+). It carries out the reaction D-methionine(out) + ATP + H2O = D-methionine(in) + ADP + phosphate + H(+). Its function is as follows. Part of the ABC transporter complex MetNIQ involved in methionine import. Responsible for energy coupling to the transport system. This chain is Methionine import ATP-binding protein MetN, found in Shigella boydii serotype 4 (strain Sb227).